A 110-amino-acid polypeptide reads, in one-letter code: NADH-quinone oxidoreductase subunit K (110 aa).

Helical transmembrane passes span 7 to 27 (LGSYLLVGAMLFCLGLYGVFV), 31 to 51 (IIAILMSIELMLNAVNINFIA), and 73 to 93 (IFVIVVAAAEIAVGLALVIAI).

Belongs to the complex I subunit 4L family. In terms of assembly, NDH-1 is composed of 14 different subunits. Subunits NuoA, H, J, K, L, M, N constitute the membrane sector of the complex.

The protein resides in the cell membrane. The catalysed reaction is a quinone + NADH + 5 H(+)(in) = a quinol + NAD(+) + 4 H(+)(out). Its function is as follows. NDH-1 shuttles electrons from NADH, via FMN and iron-sulfur (Fe-S) centers, to quinones in the respiratory chain. The immediate electron acceptor for the enzyme in this species is believed to be a menaquinone. Couples the redox reaction to proton translocation (for every two electrons transferred, four hydrogen ions are translocated across the cytoplasmic membrane), and thus conserves the redox energy in a proton gradient. The chain is NADH-quinone oxidoreductase subunit K from Desulfitobacterium hafniense (strain DSM 10664 / DCB-2).